The sequence spans 363 residues: DNA replication and repair protein RecF (363 aa).

Residue 30–37 coordinates ATP; the sequence is GNNAQGKT.

The protein belongs to the RecF family.

It localises to the cytoplasm. Its function is as follows. The RecF protein is involved in DNA metabolism; it is required for DNA replication and normal SOS inducibility. RecF binds preferentially to single-stranded, linear DNA. It also seems to bind ATP. The chain is DNA replication and repair protein RecF from Clostridium acetobutylicum (strain ATCC 824 / DSM 792 / JCM 1419 / IAM 19013 / LMG 5710 / NBRC 13948 / NRRL B-527 / VKM B-1787 / 2291 / W).